A 601-amino-acid polypeptide reads, in one-letter code: Elongation factor 4 (601 aa).

In terms of domain architecture, tr-type G spans 7-189 (DTIRNFSIVA…AIVAKLPPPK (183 aa)). Residues 19 to 24 (DHGKST) and 136 to 139 (NKID) contribute to the GTP site.

This sequence belongs to the TRAFAC class translation factor GTPase superfamily. Classic translation factor GTPase family. LepA subfamily.

It is found in the cell inner membrane. The enzyme catalyses GTP + H2O = GDP + phosphate + H(+). Its function is as follows. Required for accurate and efficient protein synthesis under certain stress conditions. May act as a fidelity factor of the translation reaction, by catalyzing a one-codon backward translocation of tRNAs on improperly translocated ribosomes. Back-translocation proceeds from a post-translocation (POST) complex to a pre-translocation (PRE) complex, thus giving elongation factor G a second chance to translocate the tRNAs correctly. Binds to ribosomes in a GTP-dependent manner. This is Elongation factor 4 from Methylobacterium nodulans (strain LMG 21967 / CNCM I-2342 / ORS 2060).